The chain runs to 253 residues: Octanoyltransferase (253 aa).

One can recognise a BPL/LPL catalytic domain in the interval Pro-47–Glu-236. Substrate is bound by residues Arg-87–His-94, Ala-159–Gly-161, and Gly-172–Ser-174. The active-site Acyl-thioester intermediate is the Cys-190.

The protein belongs to the LipB family.

The protein localises to the cytoplasm. The catalysed reaction is octanoyl-[ACP] + L-lysyl-[protein] = N(6)-octanoyl-L-lysyl-[protein] + holo-[ACP] + H(+). It participates in protein modification; protein lipoylation via endogenous pathway; protein N(6)-(lipoyl)lysine from octanoyl-[acyl-carrier-protein]: step 1/2. Its function is as follows. Catalyzes the transfer of endogenously produced octanoic acid from octanoyl-acyl-carrier-protein onto the lipoyl domains of lipoate-dependent enzymes. Lipoyl-ACP can also act as a substrate although octanoyl-ACP is likely to be the physiological substrate. The protein is Octanoyltransferase of Cupriavidus pinatubonensis (strain JMP 134 / LMG 1197) (Cupriavidus necator (strain JMP 134)).